Consider the following 213-residue polypeptide: Thiamine-phosphate synthase (213 aa).

Residues 39–43 (QLREK) and asparagine 71 contribute to the 4-amino-2-methyl-5-(diphosphooxymethyl)pyrimidine site. Positions 72 and 91 each coordinate Mg(2+). Serine 110 is a binding site for 4-amino-2-methyl-5-(diphosphooxymethyl)pyrimidine. 136–138 (TGT) lines the 2-[(2R,5Z)-2-carboxy-4-methylthiazol-5(2H)-ylidene]ethyl phosphate pocket. Lysine 139 contributes to the 4-amino-2-methyl-5-(diphosphooxymethyl)pyrimidine binding site. 2-[(2R,5Z)-2-carboxy-4-methylthiazol-5(2H)-ylidene]ethyl phosphate-binding positions include glycine 166 and 186-187 (VS).

This sequence belongs to the thiamine-phosphate synthase family. Requires Mg(2+) as cofactor.

It carries out the reaction 2-[(2R,5Z)-2-carboxy-4-methylthiazol-5(2H)-ylidene]ethyl phosphate + 4-amino-2-methyl-5-(diphosphooxymethyl)pyrimidine + 2 H(+) = thiamine phosphate + CO2 + diphosphate. The catalysed reaction is 2-(2-carboxy-4-methylthiazol-5-yl)ethyl phosphate + 4-amino-2-methyl-5-(diphosphooxymethyl)pyrimidine + 2 H(+) = thiamine phosphate + CO2 + diphosphate. The enzyme catalyses 4-methyl-5-(2-phosphooxyethyl)-thiazole + 4-amino-2-methyl-5-(diphosphooxymethyl)pyrimidine + H(+) = thiamine phosphate + diphosphate. It participates in cofactor biosynthesis; thiamine diphosphate biosynthesis; thiamine phosphate from 4-amino-2-methyl-5-diphosphomethylpyrimidine and 4-methyl-5-(2-phosphoethyl)-thiazole: step 1/1. Functionally, condenses 4-methyl-5-(beta-hydroxyethyl)thiazole monophosphate (THZ-P) and 2-methyl-4-amino-5-hydroxymethyl pyrimidine pyrophosphate (HMP-PP) to form thiamine monophosphate (TMP). The chain is Thiamine-phosphate synthase from Clostridium botulinum (strain Eklund 17B / Type B).